Reading from the N-terminus, the 68-residue chain is Purkinje cell protein 4-like protein 1 (68 aa).

Residues 1 to 16 (MSELNTKTSPATNQAA) are compositionally biased toward polar residues. Residues 1–45 (MSELNTKTSPATNQAAGQEEKGKAGNVKKAEEEEEIDIDLTAPET) form a disordered region. At Thr-8 the chain carries Phosphothreonine. Over residues 18–31 (QEEKGKAGNVKKAE) the composition is skewed to basic and acidic residues. Residues 45–68 (TEKAALAIQGKFRRFQKRKKDPSS) form the IQ domain.

This sequence belongs to the PCP4 family.

The protein is Purkinje cell protein 4-like protein 1 (PCP4L1) of Homo sapiens (Human).